Consider the following 691-residue polypeptide: Elongation factor G (691 aa).

The tr-type G domain maps to 10-284 (KRLRNIGIAA…AVVDYLPSPL (275 aa)). Residues 19-26 (AHIDAGKT), 83-87 (DTPGH), and 137-140 (NKMD) each bind GTP.

It belongs to the TRAFAC class translation factor GTPase superfamily. Classic translation factor GTPase family. EF-G/EF-2 subfamily.

It localises to the cytoplasm. Catalyzes the GTP-dependent ribosomal translocation step during translation elongation. During this step, the ribosome changes from the pre-translocational (PRE) to the post-translocational (POST) state as the newly formed A-site-bound peptidyl-tRNA and P-site-bound deacylated tRNA move to the P and E sites, respectively. Catalyzes the coordinated movement of the two tRNA molecules, the mRNA and conformational changes in the ribosome. The chain is Elongation factor G (fusA) from Thermus thermophilus (strain ATCC 27634 / DSM 579 / HB8).